An 83-amino-acid chain; its full sequence is Cytochrome b559 subunit alpha (83 aa).

Residues 21 to 35 (VIHSITIPSLFIAGW) form a helical membrane-spanning segment. H23 contacts heme.

Belongs to the PsbE/PsbF family. In terms of assembly, heterodimer of an alpha subunit and a beta subunit. PSII is composed of 1 copy each of membrane proteins PsbA, PsbB, PsbC, PsbD, PsbE, PsbF, PsbH, PsbI, PsbJ, PsbK, PsbL, PsbM, PsbT, PsbX, PsbY, PsbZ, Psb30/Ycf12, at least 3 peripheral proteins of the oxygen-evolving complex and a large number of cofactors. It forms dimeric complexes. Heme b serves as cofactor.

It localises to the plastid. Its subcellular location is the chloroplast thylakoid membrane. This b-type cytochrome is tightly associated with the reaction center of photosystem II (PSII). PSII is a light-driven water:plastoquinone oxidoreductase that uses light energy to abstract electrons from H(2)O, generating O(2) and a proton gradient subsequently used for ATP formation. It consists of a core antenna complex that captures photons, and an electron transfer chain that converts photonic excitation into a charge separation. This Helianthus annuus (Common sunflower) protein is Cytochrome b559 subunit alpha.